The chain runs to 500 residues: Glycerol kinase (500 aa).

T15 provides a ligand contact to ADP. 3 residues coordinate ATP: T15, T16, and S17. T15 serves as a coordination point for sn-glycerol 3-phosphate. R19 provides a ligand contact to ADP. The sn-glycerol 3-phosphate site is built by R85, E86, Y137, and D245. Glycerol is bound by residues R85, E86, Y137, D245, and Q246. Positions 267 and 310 each coordinate ADP. Residues T267, G310, Q314, and G411 each contribute to the ATP site. G411 and N415 together coordinate ADP.

It belongs to the FGGY kinase family.

The catalysed reaction is glycerol + ATP = sn-glycerol 3-phosphate + ADP + H(+). The protein operates within polyol metabolism; glycerol degradation via glycerol kinase pathway; sn-glycerol 3-phosphate from glycerol: step 1/1. Inhibited by fructose 1,6-bisphosphate (FBP). In terms of biological role, key enzyme in the regulation of glycerol uptake and metabolism. Catalyzes the phosphorylation of glycerol to yield sn-glycerol 3-phosphate. In Aeromonas salmonicida (strain A449), this protein is Glycerol kinase.